The sequence spans 191 residues: uncharacterized protein (191 aa).

The protein to B.subtilis GlpP.

This is an uncharacterized protein from Escherichia coli (strain K12).